Reading from the N-terminus, the 679-residue chain is Glycine--tRNA ligase beta subunit (679 aa).

The protein belongs to the class-II aminoacyl-tRNA synthetase family. In terms of assembly, tetramer of two alpha and two beta subunits.

Its subcellular location is the cytoplasm. It carries out the reaction tRNA(Gly) + glycine + ATP = glycyl-tRNA(Gly) + AMP + diphosphate. The protein is Glycine--tRNA ligase beta subunit (glyS) of Bacillus subtilis (strain 168).